The sequence spans 163 residues: Phosphopantetheine adenylyltransferase (163 aa).

Thr10 serves as a coordination point for substrate. ATP contacts are provided by residues 10–11 and His18; that span reads TF. Residues Lys42, Leu74, and Arg88 each contribute to the substrate site. ATP contacts are provided by residues 89-91, Glu99, and 124-130; these read GLR and NSFISST.

Belongs to the bacterial CoaD family. Homohexamer. It depends on Mg(2+) as a cofactor.

It localises to the cytoplasm. It catalyses the reaction (R)-4'-phosphopantetheine + ATP + H(+) = 3'-dephospho-CoA + diphosphate. It functions in the pathway cofactor biosynthesis; coenzyme A biosynthesis; CoA from (R)-pantothenate: step 4/5. Reversibly transfers an adenylyl group from ATP to 4'-phosphopantetheine, yielding dephospho-CoA (dPCoA) and pyrophosphate. The sequence is that of Phosphopantetheine adenylyltransferase from Shewanella baltica (strain OS195).